The following is a 174-amino-acid chain: ATP-dependent protease subunit HslV (174 aa).

Residue Thr-2 is part of the active site. Na(+) is bound by residues Gly-159, Asp-162, and Thr-165.

This sequence belongs to the peptidase T1B family. HslV subfamily. As to quaternary structure, a double ring-shaped homohexamer of HslV is capped on each side by a ring-shaped HslU homohexamer. The assembly of the HslU/HslV complex is dependent on binding of ATP.

It localises to the cytoplasm. The catalysed reaction is ATP-dependent cleavage of peptide bonds with broad specificity.. Its activity is regulated as follows. Allosterically activated by HslU binding. Functionally, protease subunit of a proteasome-like degradation complex believed to be a general protein degrading machinery. This is ATP-dependent protease subunit HslV from Lacticaseibacillus casei (strain BL23) (Lactobacillus casei).